Reading from the N-terminus, the 282-residue chain is Type 1 encapsulin shell protein (282 aa).

This sequence belongs to the encapsulin family. Family 1 subfamily. In terms of assembly, initially thought to form a 180 subunit shell. Forms hollow shells composed of 240 subunits, making a shell about 42-43 nm in diameter. The monomer is capable of assuming 4 different conformations which allows packaging into the icosahedron. The shell has 12 pentameric and 30 hexameric capsomers which form the vertices and faces of the icosahedral nanocompartment.

Its subcellular location is the encapsulin nanocompartment. In terms of biological role, shell component of a type 1 encapsulin nanocompartment. Assembles into proteinaceous icosahedral shells 42-43 nm in diameter with an iron- and phosphorus-rich core (1Fe:1.1P) which can store over 23,000-35,000 iron atoms (with a calculated maximum of 83,000 Fe). There are 2 types of negatively charged open pores in the cryo-electron structure; a 3-fold pore where 3 hexamers meet with a minimal size of 7.2 Angstroms and a 5-fold pore where pentamers meet with a minimal size of 2.3 Angstroms. The 2-fold pore seen in other encapsulin nanocompartments is closed. Empty compartments can be generated in E.coli. Both types of pore have extra density in their centers in the structure. 2 different cargo proteins have been identified (IMEF and Fer); when both are expressed in E.coli with the shell protein only IMEF is detected within the nanocompartment. E.coli expressing all 3 genes stores the largest amount of iron and is protected from Fe/H2O2-induced oxidative stress. Part of the iron-mineralizing encapsulin-associated Firmicute (IMEF) system. The chain is Type 1 encapsulin shell protein from Bacillus thermotolerans (Quasibacillus thermotolerans).